The chain runs to 508 residues: GTPase Obg (508 aa).

The Obg domain occupies 2–159 (ARFVDRVVLH…HDVILELKSM (158 aa)). An OBG-type G domain is found at 160 to 341 (ADIGLVGFPS…LKYAMLDLVQ (182 aa)). GTP contacts are provided by residues 166–173 (GFPSAGKS), 191–195 (FTTLQ), 212–215 (DVPG), 292–295 (NKAD), and 322–324 (SAV). Ser-173 and Thr-193 together coordinate Mg(2+). Residues 364–444 (DARKKNKDFE…IGEVSFEWEP (81 aa)) form the OCT domain.

The protein belongs to the TRAFAC class OBG-HflX-like GTPase superfamily. OBG GTPase family. In terms of assembly, monomer. It depends on Mg(2+) as a cofactor.

It localises to the cytoplasm. Its function is as follows. An essential GTPase which binds GTP, GDP and possibly (p)ppGpp with moderate affinity, with high nucleotide exchange rates and a fairly low GTP hydrolysis rate. Plays a role in control of the cell cycle, stress response, ribosome biogenesis and in those bacteria that undergo differentiation, in morphogenesis control. In Corynebacterium diphtheriae (strain ATCC 700971 / NCTC 13129 / Biotype gravis), this protein is GTPase Obg.